A 424-amino-acid polypeptide reads, in one-letter code: UPF0597 protein Shew185_3080 (424 aa).

Belongs to the UPF0597 family.

The polypeptide is UPF0597 protein Shew185_3080 (Shewanella baltica (strain OS185)).